A 412-amino-acid polypeptide reads, in one-letter code: Translation initiation factor 2 subunit gamma (412 aa).

The tr-type G domain maps to 7 to 203 (QPEVNIGLVG…AIESEIPTPD (197 aa)). The interval 16–23 (GHVDHGKT) is G1. 4 residues coordinate Mg(2+): Asp19, Thr23, Gly44, and Ser46. 19 to 24 (DHGKTT) contributes to the GTP binding site. A G2 region spans residues 44-48 (GISIR). The segment at 90-93 (DAPG) is G3. Residues 146 to 149 (NKVD) and 181 to 183 (SAQ) each bind GTP. The G4 stretch occupies residues 146-149 (NKVD). The G5 stretch occupies residues 181 to 183 (SAQ).

Belongs to the TRAFAC class translation factor GTPase superfamily. Classic translation factor GTPase family. EIF2G subfamily. Heterotrimer composed of an alpha, a beta and a gamma chain. It depends on Mg(2+) as a cofactor.

It catalyses the reaction GTP + H2O = GDP + phosphate + H(+). Its function is as follows. eIF-2 functions in the early steps of protein synthesis by forming a ternary complex with GTP and initiator tRNA. The protein is Translation initiation factor 2 subunit gamma of Halorubrum lacusprofundi (strain ATCC 49239 / DSM 5036 / JCM 8891 / ACAM 34).